The chain runs to 84 residues: U7-ctenitoxin-Pn1a (84 aa).

Positions 1 to 17 are cleaved as a signal peptide; it reads MKLCILLVVLLITVVRA. Residues 18-38 constitute a propeptide that is removed on maturation; sequence EEDILENEAEDISPAIKERSA. Disulfide bonds link Cys-41–Cys-56, Cys-48–Cys-61, Cys-55–Cys-78, and Cys-63–Cys-76.

Expressed by the venom gland.

The protein resides in the secreted. In terms of biological role, antagonist of L-type calcium channels (Cav1/CACNA1). Causes paralysis in the posterior limbs and gradual decreases in movement and aggression during 24 hours at dose levels of 5 ug per mouse. The chain is U7-ctenitoxin-Pn1a from Phoneutria nigriventer (Brazilian armed spider).